A 333-amino-acid polypeptide reads, in one-letter code: Protein FLAP1 homolog A (333 aa).

A helical transmembrane segment spans residues 26–46 (VVIIFVLAFTLVFTPTFEAEA). Residues 53-74 (IGGGSFRAPSAPSRSYSGPSGG) form a disordered region. Positions 58 to 70 (FRAPSAPSRSYSG) are enriched in low complexity. 2 helical membrane-spanning segments follow: residues 92–112 (IIPF…LVMI) and 261–281 (GEYI…LPAV).

This sequence belongs to the FLAP family.

The protein localises to the cellular thylakoid membrane. It is found in the cell inner membrane. Essential for photosynthetic growth under fluctuating light by modulating PxcA- and PxcL-dependent intracellular pH regulation via proton transport (e.g. transient pH reduction upon transition from dark to light followed by an increase in the light until light-to-dark shift). This is Protein FLAP1 homolog A from Synechocystis sp. (strain ATCC 27184 / PCC 6803 / Kazusa).